Here is a 196-residue protein sequence, read N- to C-terminus: Putative acetyltransferase YJL218W (196 aa).

Asn84 is an acetyl-CoA binding site. The Proton donor/acceptor role is filled by His114. Acetyl-CoA is bound by residues Gly141, Ala159, 164–165 (IR), Lys179, and Arg182.

It belongs to the transferase hexapeptide repeat family. Homodimer.

This Saccharomyces cerevisiae (strain ATCC 204508 / S288c) (Baker's yeast) protein is Putative acetyltransferase YJL218W.